A 598-amino-acid polypeptide reads, in one-letter code: Ecto-NOX disulfide-thiol exchanger 2 (598 aa).

Positions 99–178 (KTVFVGGLPE…GRLHVDFAQA (80 aa)) constitute an RRM domain. Coiled coils occupy residues 264-299 (IQSANSHVRRLVNEKATHEKEMEEAKEKFKQALSGI) and 352-476 (RREE…KQEN).

The protein belongs to the ENOX family. Cu cation serves as cofactor. Post-translationally, glycosylated.

Its subcellular location is the cell membrane. It is found in the secreted. It localises to the extracellular space. With respect to regulation, inhibited by the antitumor sulfonylurea LY181984, the vabilloid capsaicin, and retinoids. In terms of biological role, may be involved in cell growth. Probably acts as a terminal oxidase of plasma electron transport from cytosolic NAD(P)H via hydroquinones to acceptors at the cell surface. Hydroquinone oxidase activity alternates with a protein disulfide-thiol interchange/oxidoreductase activity which may control physical membrane displacements associated with vesicle budding or cell enlargement. The activities oscillate with a period length of 22 minutes and play a role in control of the ultradian cellular biological clock. This Mus musculus (Mouse) protein is Ecto-NOX disulfide-thiol exchanger 2 (Enox2).